We begin with the raw amino-acid sequence, 1590 residues long: Defective chorion protein, FC177 isoform (1590 aa).

The first 19 residues, 1-19 (MRLFSLLPLLALLVVQAAG), serve as a signal peptide directing secretion. Disordered stretches follow at residues 23 to 60 (VTSDDPATDAGSTTNSTTDTKPRIPSQDEILGQMPSIN), 184 to 212 (APAPAPAAAPPPAPAPAADPPAAPVPDAP), and 268 to 294 (PAQPAAAGTDAQASDISEVRVRPEDPY). Positions 32–41 (AGSTTNSTTD) are enriched in polar residues. Positions 268 to 280 (PAQPAAAGTDAQA) are enriched in low complexity. Repeat copies occupy residues 493–518 (QNPMMMQQRQWSEEQAKIQQNQQQIQ), 519–544 (QNPMMMQQRQWSEEQAKIQQNQQQIQ), 545–570 (QNPMMMQQRQWSEEQAKIQQNQQQIQ), 571–596 (QNPMMMQQRQWSEEQAKIQQNQQQIQ), and 597–622 (QNPMMVQQRQWSEEQAKIQQNQQQIQ). The segment at 493–788 (QNPMMMQQRQ…IQQQQRQMMQ (296 aa)) is 12 X 26 AA approximate tandem repeats, Glu, Met-rich. The stretch at 623 to 652 (QNPMMMQQRQWSEEQAKIQHDQQMAQQMAQ) is one 6; approximate repeat. A 7; approximate repeat occupies 653–680 (QGLMMTEQRQRQWSEDQAKIQQAQQMAQ). One copy of the 8; approximate repeat lies at 681–696 (QTPMMMPQMQQRQWTE). A 9; approximate repeat occupies 697–720 (DPQMVQQMQQRQWAEDQTRMQMAQ). One copy of the 10; approximate repeat lies at 721 to 733 (QNPMMQQQRQMAE). Residues 734–758 (NPQMMQQRQWSEEQTKIEQAQQMAQ) form an 11; approximate repeat. The stretch at 759-788 (QNQMMMQQMQQRQWSEDQAQIQQQQRQMMQ) is one 12; approximate repeat. Disordered stretches follow at residues 843–875 (GPQMPENEGTARHKVDALGVGGNKRKKSKSKSA), 944–983 (RTINPKQPGEVGGSESQKSNSNPPTTLTPAPQEQPQEHRV), 1119–1221 (EEDA…TKSI), 1261–1352 (PVTE…DDNN), 1375–1515 (FAQG…QATV), and 1538–1590 (EKKS…QTKA). Polar residues predominate over residues 957–977 (SESQKSNSNPPTTLTPAPQEQ). The span at 1119 to 1130 (EEDAQQEPMEEE) shows a compositional bias: acidic residues. The segment covering 1131 to 1148 (QLQHDPNTEPQYNHKDFV) has biased composition (basic and acidic residues). Residues 1151 to 1195 (TTSTASPITSTTEAATPTGSDSTSEATVTPEVTTTTSTSTTTTTE) are compositionally biased toward low complexity. Over residues 1205-1221 (QQDSQAEAESSHVTKSI) the composition is skewed to polar residues. Positions 1272–1288 (EPSKQEDKPKVEEKVIA) are enriched in basic and acidic residues. The segment covering 1295-1306 (EQEEELEEDEDS) has biased composition (acidic residues). 2 stretches are compositionally biased toward low complexity: residues 1307–1319 (TSISTTTETPSPS) and 1435–1452 (DSGSDSSDGTTTTTTPSP). The segment covering 1493-1504 (QRPKKSMSKPKK) has biased composition (basic residues). Low complexity predominate over residues 1505–1515 (QSSQVTTQATV). Over residues 1554–1576 (TKPKSIKPVKVIKRKRLRRRQHK) the composition is skewed to basic residues. A compositionally biased stretch (polar residues) spans 1577–1590 (SIATTIRSPIQTKA).

The protein localises to the secreted. In terms of biological role, required for proper assembly of the eggshell. This Drosophila melanogaster (Fruit fly) protein is Defective chorion protein, FC177 isoform.